The sequence spans 377 residues: Succinyl-diaminopimelate desuccinylase (377 aa).

Histidine 75 contacts Zn(2+). Residue aspartate 77 is part of the active site. Aspartate 106 is a binding site for Zn(2+). Glutamate 136 (proton acceptor) is an active-site residue. The Zn(2+) site is built by glutamate 137, glutamate 165, and histidine 350.

Belongs to the peptidase M20A family. DapE subfamily. Homodimer. Zn(2+) serves as cofactor. Requires Co(2+) as cofactor.

The enzyme catalyses N-succinyl-(2S,6S)-2,6-diaminopimelate + H2O = (2S,6S)-2,6-diaminopimelate + succinate. The protein operates within amino-acid biosynthesis; L-lysine biosynthesis via DAP pathway; LL-2,6-diaminopimelate from (S)-tetrahydrodipicolinate (succinylase route): step 3/3. Functionally, catalyzes the hydrolysis of N-succinyl-L,L-diaminopimelic acid (SDAP), forming succinate and LL-2,6-diaminopimelate (DAP), an intermediate involved in the bacterial biosynthesis of lysine and meso-diaminopimelic acid, an essential component of bacterial cell walls. This Sphingopyxis alaskensis (strain DSM 13593 / LMG 18877 / RB2256) (Sphingomonas alaskensis) protein is Succinyl-diaminopimelate desuccinylase.